The following is a 148-amino-acid chain: Large ribosomal subunit protein bL9 (148 aa).

This sequence belongs to the bacterial ribosomal protein bL9 family.

Binds to the 23S rRNA. This chain is Large ribosomal subunit protein bL9, found in Lachnoclostridium phytofermentans (strain ATCC 700394 / DSM 18823 / ISDg) (Clostridium phytofermentans).